The sequence spans 152 residues: Deoxyuridine 5'-triphosphate nucleotidohydrolase (152 aa).

Substrate-binding positions include 72-74, asparagine 85, and 89-91; these read RSG and TID.

It belongs to the dUTPase family. Requires Mg(2+) as cofactor.

The enzyme catalyses dUTP + H2O = dUMP + diphosphate + H(+). Its pathway is pyrimidine metabolism; dUMP biosynthesis; dUMP from dCTP (dUTP route): step 2/2. Functionally, this enzyme is involved in nucleotide metabolism: it produces dUMP, the immediate precursor of thymidine nucleotides and it decreases the intracellular concentration of dUTP so that uracil cannot be incorporated into DNA. This chain is Deoxyuridine 5'-triphosphate nucleotidohydrolase, found in Rhodopseudomonas palustris (strain HaA2).